Here is a 327-residue protein sequence, read N- to C-terminus: Zinc transport protein ZntB (327 aa).

Over 1–271 the chain is Cytoplasmic; the sequence is MDVVEGKALQ…AMNRRTYTMS (271 aa). Residues 272–292 traverse the membrane as a helical segment; that stretch reads LLAMVFLPTTFLTGLFGVNLG. The Periplasmic portion of the chain corresponds to 293 to 300; it reads GIPGNTDA. The chain crosses the membrane as a helical span at residues 301–321; it reads FGFTIFCMMLVVLVLSVAWWL. At 322–327 the chain is on the cytoplasmic side; that stretch reads KRSKWL.

It belongs to the CorA metal ion transporter (MIT) (TC 1.A.35) family.

It is found in the cell inner membrane. It carries out the reaction Zn(2+)(out) + H(+)(out) = Zn(2+)(in) + H(+)(in). Zinc transporter. Acts as a Zn(2+):proton symporter, which likely mediates zinc ion uptake. The chain is Zinc transport protein ZntB from Yersinia pseudotuberculosis serotype O:1b (strain IP 31758).